The chain runs to 330 residues: Methionyl-tRNA formyltransferase (330 aa).

Residue 116 to 119 (SLLP) coordinates (6S)-5,6,7,8-tetrahydrofolate.

The protein belongs to the Fmt family.

The enzyme catalyses L-methionyl-tRNA(fMet) + (6R)-10-formyltetrahydrofolate = N-formyl-L-methionyl-tRNA(fMet) + (6S)-5,6,7,8-tetrahydrofolate + H(+). Its function is as follows. Attaches a formyl group to the free amino group of methionyl-tRNA(fMet). The formyl group appears to play a dual role in the initiator identity of N-formylmethionyl-tRNA by promoting its recognition by IF2 and preventing the misappropriation of this tRNA by the elongation apparatus. The polypeptide is Methionyl-tRNA formyltransferase (Nitratidesulfovibrio vulgaris (strain DP4) (Desulfovibrio vulgaris)).